Reading from the N-terminus, the 325-residue chain is Geranylgeranyl transferase type-2 subunit beta (325 aa).

PFTB repeat units follow at residues 9 to 50, 57 to 99, 109 to 150, 157 to 198, 208 to 249, and 256 to 298; these read KEKH…CVLD, KEEV…ATYD, KVRL…SILG, VDPA…AIAN, LEEI…AIIG, and YEKL…SLMG. Residues 183–185 and 228–240 contribute to the geranylgeranyl diphosphate site; these read HAA and RPSK…YSWW. The Zn(2+) site is built by Asp-234, Cys-236, and His-286.

It belongs to the protein prenyltransferase subunit beta family. As to quaternary structure, heterodimer of an alpha and a beta subunit. It depends on Zn(2+) as a cofactor.

It carries out the reaction geranylgeranyl diphosphate + L-cysteinyl-[protein] = S-geranylgeranyl-L-cysteinyl-[protein] + diphosphate. Catalyzes the transfer of a geranyl-geranyl moiety from geranyl-geranyl pyrophosphate to proteins having the C-terminal -XCC or -XCXC, where both cysteines may become modified. Acts on YPT1 and SEC4. This chain is Geranylgeranyl transferase type-2 subunit beta (BET2), found in Saccharomyces cerevisiae (strain ATCC 204508 / S288c) (Baker's yeast).